A 650-amino-acid chain; its full sequence is 1-deoxy-D-xylulose-5-phosphate synthase (650 aa).

Residues His87 and 128–130 (GHS) contribute to the thiamine diphosphate site. Asp159 is a binding site for Mg(2+). Thiamine diphosphate is bound by residues 160-161 (GS), Asn188, Tyr299, and Glu383. Position 188 (Asn188) interacts with Mg(2+).

This sequence belongs to the transketolase family. DXPS subfamily. In terms of assembly, homodimer. Mg(2+) serves as cofactor. It depends on thiamine diphosphate as a cofactor.

The catalysed reaction is D-glyceraldehyde 3-phosphate + pyruvate + H(+) = 1-deoxy-D-xylulose 5-phosphate + CO2. The protein operates within metabolic intermediate biosynthesis; 1-deoxy-D-xylulose 5-phosphate biosynthesis; 1-deoxy-D-xylulose 5-phosphate from D-glyceraldehyde 3-phosphate and pyruvate: step 1/1. In terms of biological role, catalyzes the acyloin condensation reaction between C atoms 2 and 3 of pyruvate and glyceraldehyde 3-phosphate to yield 1-deoxy-D-xylulose-5-phosphate (DXP). The polypeptide is 1-deoxy-D-xylulose-5-phosphate synthase (Syntrophus aciditrophicus (strain SB)).